Consider the following 261-residue polypeptide: Ribosomal RNA small subunit methyltransferase J (261 aa).

Residues 111–112 (RD), 127–128 (ER), 163–164 (SS), and aspartate 181 contribute to the S-adenosyl-L-methionine site.

The protein belongs to the methyltransferase superfamily. RsmJ family.

It is found in the cytoplasm. The catalysed reaction is guanosine(1516) in 16S rRNA + S-adenosyl-L-methionine = N(2)-methylguanosine(1516) in 16S rRNA + S-adenosyl-L-homocysteine + H(+). Specifically methylates the guanosine in position 1516 of 16S rRNA. This chain is Ribosomal RNA small subunit methyltransferase J, found in Shewanella sp. (strain ANA-3).